Consider the following 107-residue polypeptide: Putative double-stranded DNA mimic protein ETA_15890 (107 aa).

It belongs to the putative dsDNA mimic protein family.

May act as a double-stranded DNA (dsDNA) mimic. Probably regulates the activity of a dsDNA-binding protein. The chain is Putative double-stranded DNA mimic protein ETA_15890 from Erwinia tasmaniensis (strain DSM 17950 / CFBP 7177 / CIP 109463 / NCPPB 4357 / Et1/99).